Consider the following 103-residue polypeptide: Large ribosomal subunit protein bL21 (103 aa).

Belongs to the bacterial ribosomal protein bL21 family. Part of the 50S ribosomal subunit. Contacts protein L20.

Its function is as follows. This protein binds to 23S rRNA in the presence of protein L20. This is Large ribosomal subunit protein bL21 from Alteromonas mediterranea (strain DSM 17117 / CIP 110805 / LMG 28347 / Deep ecotype).